The primary structure comprises 124 residues: Kinocilin (124 aa).

The next 2 helical transmembrane spans lie at leucine 13–valine 33 and valine 40–leucine 60. The disordered stretch occupies residues proline 80–glycine 124. Residues arginine 90–arginine 109 show a composition bias toward polar residues. Positions threonine 110–glycine 124 are enriched in basic and acidic residues.

Preferentially expressed in the inner ear and testis. Localizes mainly in the kinocilium of sensory cells in the inner ear. Also present in the manchette of the spermatids, a transient structure enriched in interconnected microtubules (at protein level).

Its subcellular location is the membrane. Functionally, may play a role in stabilizing dense microtubular networks or in vesicular trafficking. The protein is Kinocilin (Kncn) of Mus musculus (Mouse).